The primary structure comprises 382 residues: Mannitol-1-phosphate 5-dehydrogenase (382 aa).

3 to 14 contacts NAD(+); it reads ALHFGAGNIGRG.

Belongs to the mannitol dehydrogenase family.

The enzyme catalyses D-mannitol 1-phosphate + NAD(+) = beta-D-fructose 6-phosphate + NADH + H(+). The sequence is that of Mannitol-1-phosphate 5-dehydrogenase from Salmonella paratyphi A (strain ATCC 9150 / SARB42).